We begin with the raw amino-acid sequence, 297 residues long: Glycerol-3-phosphate dehydrogenase [NAD(P)+] (297 aa).

Residues W11, R33, and K79 each coordinate NADPH. Positions 79, 107, and 109 each coordinate sn-glycerol 3-phosphate. A111 contributes to the NADPH binding site. Sn-glycerol 3-phosphate is bound by residues K161, D214, S224, R225, and N226. K161 functions as the Proton acceptor in the catalytic mechanism. Residue R225 participates in NADPH binding. Residues V249 and E251 each coordinate NADPH.

Belongs to the NAD-dependent glycerol-3-phosphate dehydrogenase family.

The protein localises to the cytoplasm. It carries out the reaction sn-glycerol 3-phosphate + NAD(+) = dihydroxyacetone phosphate + NADH + H(+). It catalyses the reaction sn-glycerol 3-phosphate + NADP(+) = dihydroxyacetone phosphate + NADPH + H(+). It participates in membrane lipid metabolism; glycerophospholipid metabolism. Functionally, catalyzes the reduction of the glycolytic intermediate dihydroxyacetone phosphate (DHAP) to sn-glycerol 3-phosphate (G3P), the key precursor for phospholipid synthesis. In Campylobacter jejuni subsp. jejuni serotype O:23/36 (strain 81-176), this protein is Glycerol-3-phosphate dehydrogenase [NAD(P)+].